The chain runs to 379 residues: Quinolinate synthase (379 aa).

Residues His60 and Ser81 each coordinate iminosuccinate. Cys126 is a binding site for [4Fe-4S] cluster. Iminosuccinate-binding positions include 152 to 154 (YAN) and Ser169. Cys213 is a binding site for [4Fe-4S] cluster. Residues 239 to 241 (HPE) and Thr256 each bind iminosuccinate. Residue Cys310 participates in [4Fe-4S] cluster binding.

Belongs to the quinolinate synthase family. Type 1 subfamily. [4Fe-4S] cluster serves as cofactor.

It localises to the cytoplasm. It carries out the reaction iminosuccinate + dihydroxyacetone phosphate = quinolinate + phosphate + 2 H2O + H(+). Its pathway is cofactor biosynthesis; NAD(+) biosynthesis; quinolinate from iminoaspartate: step 1/1. Catalyzes the condensation of iminoaspartate with dihydroxyacetone phosphate to form quinolinate. The protein is Quinolinate synthase of Herminiimonas arsenicoxydans.